A 499-amino-acid polypeptide reads, in one-letter code: Probable cytosol aminopeptidase (499 aa).

Residues K264 and D269 each contribute to the Mn(2+) site. The active site involves K276. The Mn(2+) site is built by D287, D346, and E348. R350 is an active-site residue.

The protein belongs to the peptidase M17 family. Mn(2+) serves as cofactor.

The protein localises to the cytoplasm. It carries out the reaction Release of an N-terminal amino acid, Xaa-|-Yaa-, in which Xaa is preferably Leu, but may be other amino acids including Pro although not Arg or Lys, and Yaa may be Pro. Amino acid amides and methyl esters are also readily hydrolyzed, but rates on arylamides are exceedingly low.. The enzyme catalyses Release of an N-terminal amino acid, preferentially leucine, but not glutamic or aspartic acids.. Its function is as follows. Presumably involved in the processing and regular turnover of intracellular proteins. Catalyzes the removal of unsubstituted N-terminal amino acids from various peptides. In Rhodopseudomonas palustris (strain BisB18), this protein is Probable cytosol aminopeptidase.